Consider the following 309-residue polypeptide: Ribonuclease Z (309 aa).

Zn(2+) contacts are provided by His63, His65, Asp67, His68, His145, Asp216, and His274. Asp67 serves as the catalytic Proton acceptor.

Belongs to the RNase Z family. In terms of assembly, homodimer. It depends on Zn(2+) as a cofactor.

The enzyme catalyses Endonucleolytic cleavage of RNA, removing extra 3' nucleotides from tRNA precursor, generating 3' termini of tRNAs. A 3'-hydroxy group is left at the tRNA terminus and a 5'-phosphoryl group is left at the trailer molecule.. In terms of biological role, zinc phosphodiesterase, which displays some tRNA 3'-processing endonuclease activity. Probably involved in tRNA maturation, by removing a 3'-trailer from precursor tRNA. This Streptococcus agalactiae serotype Ia (strain ATCC 27591 / A909 / CDC SS700) protein is Ribonuclease Z.